Here is a 30-residue protein sequence, read N- to C-terminus: Beta/omega-theraphotoxin-Tp2a (30 aa).

Intrachain disulfides connect cysteine 2-cysteine 16, cysteine 9-cysteine 21, and cysteine 15-cysteine 25. The flexible tail region important for ability to inhibit Nav channel stretch occupies residues 26–30 (KKKLW). The segment at 29-30 (LW) is hydrophobic dyad that anchors the toxin into the membrane while positioning it over the S3 helix of Nav1.7/SCN9A.

Belongs to the neurotoxin 30 (phrixotoxin) family. As to expression, expressed by the venom gland.

It localises to the secreted. In terms of biological role, gating-modifier toxin that targets voltage-gated sodium channels with a selective activity on Nav1.7/SCN9A (IC(50)=1-1.5 nM). It inhibits both activation and inactivation. For inhibition of activation, it is 100-fold more selective for Nav1.7/SCN9A (IC(50)=0.26-3) than for other sodium channels (Nav1.2/SCN2A (IC(50)=40-540 nM), Nav1.3/SCN3A (IC(50)=102 nM), Nav1.4/SCN4A (IC(50)=30-39 nM), Nav1.5/SCN5A (IC(50)=19-90 nM), Nav1.6/SCN8A (IC(50)=26 nM), and Nav1.8/SCN10A (IC(50)=146 nM)). For inhibition of inactivation, it is 20-fold more potent in inhibiting inactivation on Nav1.7/SCN9A (IC(50)=250 nM) than other channels (about 4.6 uM for all channels). It also weakly inhibits Cav1.2/CACNA1C and Cav3.2/CACNA1H (29% block at 1 uM). It inhibits Nav1.7/SCN9A activation by interacting with DII and impairs Nav1.7/SCN9A inactivation by interacting with DIV. It docks on top of the DII S3 helix Nav1.7/SCN9A. It is about 60-fold less active on Nav1.7/SCN9A at depolarized potential (0 mV; IC(50)=15 nM), compared to -120 mV potential (IC(50)=0.26 nM). This toxin binds to lipid membrane. This ability correlates with hNav1.7/SCN9A inhibition, showing that membrane binding is the first step in the inhibitory mechanism of this toxin. It inhibits Nav1.2/SCN2A less potently when it is coexpressed with SCN2B or SCN4B than when it is expressed alone, showing that beta subunits (SCN2B and SCN4B) have a protective effect. This chain is Beta/omega-theraphotoxin-Tp2a, found in Thrixopelma pruriens (Peruvian green velvet tarantula).